Here is a 370-residue protein sequence, read N- to C-terminus: Histidinol-phosphate aminotransferase 1 (370 aa).

An N6-(pyridoxal phosphate)lysine modification is found at Lys-222.

The protein belongs to the class-II pyridoxal-phosphate-dependent aminotransferase family. Histidinol-phosphate aminotransferase subfamily. In terms of assembly, homodimer. Requires pyridoxal 5'-phosphate as cofactor.

It catalyses the reaction L-histidinol phosphate + 2-oxoglutarate = 3-(imidazol-4-yl)-2-oxopropyl phosphate + L-glutamate. Its pathway is amino-acid biosynthesis; L-histidine biosynthesis; L-histidine from 5-phospho-alpha-D-ribose 1-diphosphate: step 7/9. The protein is Histidinol-phosphate aminotransferase 1 of Bacillus thuringiensis subsp. konkukian (strain 97-27).